The chain runs to 196 residues: Protein LSM12 homolog B (196 aa).

One can recognise a Sm domain in the interval 3–70 (APGPGEYFSV…LAYVSEVDII (68 aa)). The 95-residue stretch at 81–175 (ASLNFNKLVN…IVEKHFRDVE (95 aa)) folds into the AD domain.

The protein belongs to the LSM12 family.

This is Protein LSM12 homolog B (lsm12b) from Danio rerio (Zebrafish).